The primary structure comprises 87 residues: Putative defensin-like protein 304 (87 aa).

The signal sequence occupies residues 1–19 (MKSNKVTFFLGLFLVSAFC). 3 disulfides stabilise this stretch: C27–C46, C33–C51, and C40–C53.

The protein belongs to the DEFL family.

It is found in the secreted. This Arabidopsis thaliana (Mouse-ear cress) protein is Putative defensin-like protein 304.